The following is a 182-amino-acid chain: NADH-quinone oxidoreductase subunit B (182 aa).

Residues C46, C47, C112, and C141 each contribute to the [4Fe-4S] cluster site.

Belongs to the complex I 20 kDa subunit family. NDH-1 is composed of 14 different subunits. Subunits NuoB, C, D, E, F, and G constitute the peripheral sector of the complex. Requires [4Fe-4S] cluster as cofactor.

Its subcellular location is the cell inner membrane. It catalyses the reaction a quinone + NADH + 5 H(+)(in) = a quinol + NAD(+) + 4 H(+)(out). NDH-1 shuttles electrons from NADH, via FMN and iron-sulfur (Fe-S) centers, to quinones in the respiratory chain. The immediate electron acceptor for the enzyme in this species is believed to be a menaquinone. Couples the redox reaction to proton translocation (for every two electrons transferred, four hydrogen ions are translocated across the cytoplasmic membrane), and thus conserves the redox energy in a proton gradient. In Flavobacterium johnsoniae (strain ATCC 17061 / DSM 2064 / JCM 8514 / BCRC 14874 / CCUG 350202 / NBRC 14942 / NCIMB 11054 / UW101) (Cytophaga johnsonae), this protein is NADH-quinone oxidoreductase subunit B.